Reading from the N-terminus, the 36-residue chain is Termicin (36 aa).

Intrachain disulfides connect Cys-2-Cys-24, Cys-7-Cys-29, and Cys-11-Cys-31. Gly-36 carries the post-translational modification Glycine amide.

In terms of tissue distribution, expressed in salivary glands and hemocytes.

It is found in the secreted. Weak activity against Gram-positive bacteria B.megaterium, S.pyogenes and M.luteus, strong activity against yeasts C.albicans, C.neoformans and S.cerevisiae and filamentous fungi F.oxysporum, F.culmorum, N.crassa and N.hematococca. Less active against filamentous fungus T.viride. Inactive against Gram-positive bacteria A.viridans and S.aureus, filamentous fungi A.fumigatus and B.bassiana and yeast C.glabrata. The sequence is that of Termicin from Pseudacanthotermes spiniger.